A 310-amino-acid chain; its full sequence is Tagatose-6-phosphate kinase (310 aa).

Belongs to the carbohydrate kinase PfkB family. LacC subfamily.

It catalyses the reaction D-tagatofuranose 6-phosphate + ATP = D-tagatofuranose 1,6-bisphosphate + ADP + H(+). Its pathway is carbohydrate metabolism; D-tagatose 6-phosphate degradation; D-glyceraldehyde 3-phosphate and glycerone phosphate from D-tagatose 6-phosphate: step 1/2. This Staphylococcus aureus (strain USA300 / TCH1516) protein is Tagatose-6-phosphate kinase.